A 432-amino-acid polypeptide reads, in one-letter code: Trigger factor (432 aa).

The PPIase FKBP-type domain maps to 161 to 246 (EDRVTIDFTG…LKKVEERELP (86 aa)).

This sequence belongs to the FKBP-type PPIase family. Tig subfamily. As to quaternary structure, homodimer and monomer. In vivo most of the ribosomes are in complex with monomeric TF. Uncomplexed TF, however, is in a monomer-dimer equilibrium with approximately two thirds of TF existing in a dimeric state.

It localises to the cytoplasm. It carries out the reaction [protein]-peptidylproline (omega=180) = [protein]-peptidylproline (omega=0). Functionally, involved in protein export. Acts as a chaperone by maintaining the newly synthesized protein in an open conformation. Functions as a peptidyl-prolyl cis-trans isomerase. This is Trigger factor from Escherichia coli O139:H28 (strain E24377A / ETEC).